The following is a 312-amino-acid chain: MADGVSVSELVEKIRLDVFYGDELLEQKKVTVSDISRPGLELTNYFKFYPHERIQLFGETEISYAKDSMTKDERTKIYDRMADVDTPAFVVSRGLPIPEELIQAAKNNQVPILTSTLPTSRLLSNMTNFLEDRLAERDSIHGELLEIYGLGVLITGDSGIGKSETALDLIKRGHRLIADDRVDIYQQDEQTLIGEAPRILRHLLEIRGVGIIDVMNLFGASAVKNHTEISVIVHLQNWDKDAHFDRLGNGEQTRHFFELDIPKITIPVRVGRNLGDIIEAATMNFRAKNMGYDATKVFDRNLNELIKDNSQK.

Catalysis depends on residues His141 and Lys162. Position 156 to 163 (156 to 163) interacts with ATP; the sequence is GDSGIGKS. Ser163 contributes to the Mg(2+) binding site. The active-site Proton acceptor; for phosphorylation activity. Proton donor; for dephosphorylation activity is the Asp180. The tract at residues 204–213 is important for the catalytic mechanism of both phosphorylation and dephosphorylation; sequence LEIRGVGIID. A Mg(2+)-binding site is contributed by Glu205. Arg246 is an active-site residue. Positions 267–272 are important for the catalytic mechanism of dephosphorylation; sequence PVRVGR.

This sequence belongs to the HPrK/P family. Homohexamer. It depends on Mg(2+) as a cofactor.

It catalyses the reaction [HPr protein]-L-serine + ATP = [HPr protein]-O-phospho-L-serine + ADP + H(+). It carries out the reaction [HPr protein]-O-phospho-L-serine + phosphate + H(+) = [HPr protein]-L-serine + diphosphate. Catalyzes the ATP- as well as the pyrophosphate-dependent phosphorylation of a specific serine residue in HPr, a phosphocarrier protein of the phosphoenolpyruvate-dependent sugar phosphotransferase system (PTS). HprK/P also catalyzes the pyrophosphate-producing, inorganic phosphate-dependent dephosphorylation (phosphorolysis) of seryl-phosphorylated HPr (P-Ser-HPr). The two antagonistic activities of HprK/P are regulated by several intracellular metabolites, which change their concentration in response to the absence or presence of rapidly metabolisable carbon sources (glucose, fructose, etc.) in the growth medium. Therefore, by controlling the phosphorylation state of HPr, HPrK/P is a sensor enzyme that plays a major role in the regulation of carbon metabolism and sugar transport: it mediates carbon catabolite repression (CCR), and regulates PTS-catalyzed carbohydrate uptake and inducer exclusion. The polypeptide is HPr kinase/phosphorylase (Pediococcus pentosaceus (strain ATCC 25745 / CCUG 21536 / LMG 10740 / 183-1w)).